The following is a 1067-amino-acid chain: Probable importin subunit beta-4 (1067 aa).

The region spanning 27 to 94 (ATRALETKYL…RSNLLDITLK (68 aa)) is the Importin N-terminal domain. HEAT repeat units lie at residues 159–196 (KLLL…VLES), 379–416 (GNLP…EIPT), 420–457 (KHHA…GLDK), 591–633 (PFLE…SVET), 890–927 (PFTR…FSTE), and 1013–1050 (QHLG…EIAP).

It belongs to the importin beta family.

Its subcellular location is the cytoplasm. It localises to the nucleus. It is found in the nucleus envelope. In terms of biological role, required for nuclear protein import, its predominant substrate seems to be ribosomal proteins. Binds to nucleoporins and the GTP-bound form of gsp1 (Ran). This is Probable importin subunit beta-4 (kap123) from Schizosaccharomyces pombe (strain 972 / ATCC 24843) (Fission yeast).